We begin with the raw amino-acid sequence, 84 residues long: ATP synthase subunit c (84 aa).

The next 2 helical transmembrane spans lie at 21–38 (ALGAAIAVIGAGIGIGKI) and 60–80 (MIIIAALVEGVALIAIIVCLL).

It belongs to the ATPase C chain family. In terms of assembly, F-type ATPases have 2 components, F(1) - the catalytic core - and F(0) - the membrane proton channel. F(1) has five subunits: alpha(3), beta(3), gamma(1), delta(1), epsilon(1). F(0) has three main subunits: a(1), b(2) and c(10-14). The alpha and beta chains form an alternating ring which encloses part of the gamma chain. F(1) is attached to F(0) by a central stalk formed by the gamma and epsilon chains, while a peripheral stalk is formed by the delta and b chains.

The protein localises to the cell inner membrane. In terms of biological role, f(1)F(0) ATP synthase produces ATP from ADP in the presence of a proton or sodium gradient. F-type ATPases consist of two structural domains, F(1) containing the extramembraneous catalytic core and F(0) containing the membrane proton channel, linked together by a central stalk and a peripheral stalk. During catalysis, ATP synthesis in the catalytic domain of F(1) is coupled via a rotary mechanism of the central stalk subunits to proton translocation. Functionally, key component of the F(0) channel; it plays a direct role in translocation across the membrane. A homomeric c-ring of between 10-14 subunits forms the central stalk rotor element with the F(1) delta and epsilon subunits. This is ATP synthase subunit c from Phocaeicola vulgatus (strain ATCC 8482 / DSM 1447 / JCM 5826 / CCUG 4940 / NBRC 14291 / NCTC 11154) (Bacteroides vulgatus).